We begin with the raw amino-acid sequence, 315 residues long: Calumenin (315 aa).

An N-terminal signal peptide occupies residues 1-19; sequence MDTRRLLLCLCLWVACVVS. EF-hand domains lie at 68-103, 104-139, 151-186, 188-223, 229-264, and 265-300; these read ESKE…AQKK, YVYD…TYLD, QMMV…EEFD, MKDI…HDGD, WVKT…SDYD, and HAEA…FVGS. Ca(2+) contacts are provided by aspartate 81, aspartate 83, aspartate 85, tyrosine 87, glutamate 92, aspartate 117, asparagine 119, aspartate 121, and glutamate 128. Residue asparagine 131 is glycosylated (N-linked (GlcNAc...) asparagine). Residues aspartate 164, aspartate 166, aspartate 168, glutamate 175, aspartate 201, asparagine 203, aspartate 205, glutamate 212, aspartate 242, asparagine 244, aspartate 246, lysine 248, glutamate 253, aspartate 278, asparagine 280, aspartate 282, lysine 284, and glutamate 289 each contribute to the Ca(2+) site. The Prevents secretion from ER motif lies at 312–315; it reads HDEF.

This sequence belongs to the CREC family. In terms of assembly, interacts with ggcx.

Its subcellular location is the endoplasmic reticulum membrane. The protein localises to the golgi apparatus. The protein resides in the secreted. It is found in the melanosome. It localises to the sarcoplasmic reticulum lumen. Functionally, involved in regulation of vitamin K-dependent carboxylation of multiple N-terminal glutamate residues. Seems to inhibit gamma-carboxylase ggcx. Binds 7 calcium ions with a low affinity. The protein is Calumenin (calu) of Xenopus tropicalis (Western clawed frog).